A 61-amino-acid polypeptide reads, in one-letter code: MAVPKRKTSPSKRGMRRSADGLKAPTYVEDKNSGELRRPHHIDLKTGMYRGRQVLTPKESA.

Residues Met1–Arg16 show a composition bias toward basic residues. The interval Met1–Ser33 is disordered.

The protein belongs to the bacterial ribosomal protein bL32 family.

In Allorhizobium ampelinum (strain ATCC BAA-846 / DSM 112012 / S4) (Agrobacterium vitis (strain S4)), this protein is Large ribosomal subunit protein bL32.